The primary structure comprises 188 residues: Ion-translocating oxidoreductase complex subunit B (188 aa).

Residues 1-23 (MIEAAVSMSALGLGLGLLLGVAA) form a hydrophobic region. The 4Fe-4S domain maps to 29 to 88 (ESPPILDAIEGILPGTNCGACGYPGCRGLAEAMSEGAAPVTACAPGGRDVALALAAIVET). [4Fe-4S] cluster is bound by residues Cys-46, Cys-49, Cys-54, Cys-71, Cys-113, Cys-116, Cys-119, Cys-123, Cys-143, Cys-146, Cys-149, and Cys-153. 4Fe-4S ferredoxin-type domains follow at residues 104-133 (TVAF…GANR) and 134-163 (QIHT…ARVK).

This sequence belongs to the 4Fe4S bacterial-type ferredoxin family. RnfB subfamily. As to quaternary structure, the complex is composed of six subunits: RnfA, RnfB, RnfC, RnfD, RnfE and RnfG. Requires [4Fe-4S] cluster as cofactor.

The protein localises to the cellular chromatophore membrane. Functionally, part of a membrane-bound complex that couples electron transfer with translocation of ions across the membrane. The chain is Ion-translocating oxidoreductase complex subunit B from Cereibacter sphaeroides (strain ATCC 17029 / ATH 2.4.9) (Rhodobacter sphaeroides).